The chain runs to 205 residues: Protein PAXX (205 aa).

Positions 39 to 81 (FNLYVTDAAELWSTCFSPDSLARLKARFGLSGAEDIHSRFRAA) constitute a PISA domain. The residue at position 147 (T147) is a Phosphothreonine. Residues 147 to 159 (TITSPKKNTQPAG) are compositionally biased toward polar residues. A disordered region spans residues 147 to 205 (TITSPKKNTQPAGTQFLPELDHQRGSSGPGVRRRCPGESLINPGFKSKKPAAGVDFDET). At S150 the chain carries Phosphoserine. The segment at 172–205 (SSGPGVRRRCPGESLINPGFKSKKPAAGVDFDET) is mediates interaction with XRCC5/Ku80 and XRCC6/Ku70 and association with the non-homologous end joining core complex. The short motif at 191–205 (FKSKKPAAGVDFDET) is the XLM element.

Belongs to the XRCC4-XLF family. PAXX subfamily. In terms of assembly, homodimer. Interacts with the DNA-bound XRCC5/Ku80 and XRCC6/Ku70 heterodimer (Ku complex); the interaction is direct. Associated component of the non-homologous end joining (NHEJ) complex, composed of the core proteins PRKDC, LIG4, XRCC4, XRCC6/Ku70, XRCC5/Ku86 and NHEJ1/XLF. Interacts with POLL (DNA polymerase lambda); promoting POLL recruitment to double-strand breaks (DSBs) and stimulation of the end-filling activity of POLL. In terms of processing, phosphorylation may inhibit interaction with the DNA-bound XRCC5/Ku80 and XRCC6/Ku70 heterodimer (Ku complex).

It localises to the nucleus. Its subcellular location is the chromosome. In terms of biological role, non-essential DNA repair protein involved in DNA non-homologous end joining (NHEJ); participates in double-strand break (DSB) repair and V(D)J recombination. May act as a scaffold required for accumulation of the Ku heterodimer, composed of XRCC5/Ku80 and XRCC6/Ku70, at double-strand break sites and promote the assembly and/or stability of the NHEJ machinery. Involved in NHEJ by promoting the ligation of blunt-ended DNA ends. Together with NHEJ1/XLF, collaborates with DNA polymerase lambda (POLL) to promote joining of non-cohesive DNA ends. Constitutes a non-essential component of classical NHEJ: has a complementary but distinct function with NHEJ1/XLF in DNA repair. This Mus musculus (Mouse) protein is Protein PAXX.